The chain runs to 319 residues: Pantothenate kinase (319 aa).

97–104 (GSVAVGKS) serves as a coordination point for ATP.

The protein belongs to the prokaryotic pantothenate kinase family.

The protein localises to the cytoplasm. It carries out the reaction (R)-pantothenate + ATP = (R)-4'-phosphopantothenate + ADP + H(+). It participates in cofactor biosynthesis; coenzyme A biosynthesis; CoA from (R)-pantothenate: step 1/5. In Chelativorans sp. (strain BNC1), this protein is Pantothenate kinase.